We begin with the raw amino-acid sequence, 86 residues long: Polcalcin Che a 3 (86 aa).

EF-hand domains are found at residues 8-43 and 43-78; these read QDIA…LGSV and VTPD…NRGL. Ca(2+)-binding residues include Asp21, Asn23, Asp25, Lys27, Glu32, Asp56, Asp58, Asp60, and Glu67.

In Chenopodium album (Fat hen), this protein is Polcalcin Che a 3.